Consider the following 147-residue polypeptide: Small ribosomal subunit protein uS12 (147 aa).

It belongs to the universal ribosomal protein uS12 family. As to quaternary structure, part of the 30S ribosomal subunit.

In terms of biological role, with S4 and S5 plays an important role in translational accuracy. Located at the interface of the 30S and 50S subunits. The polypeptide is Small ribosomal subunit protein uS12 (Pyrobaculum islandicum (strain DSM 4184 / JCM 9189 / GEO3)).